The primary structure comprises 150 residues: Large ribosomal subunit protein bL9 (150 aa).

This sequence belongs to the bacterial ribosomal protein bL9 family.

Binds to the 23S rRNA. The polypeptide is Large ribosomal subunit protein bL9 (Lactiplantibacillus plantarum (strain ATCC BAA-793 / NCIMB 8826 / WCFS1) (Lactobacillus plantarum)).